The chain runs to 338 residues: Mitotic spindle-associated protein SHE1 (338 aa).

Positions 1–14 (MNDKLQEEHNEKDT) are enriched in basic and acidic residues. Disordered stretches follow at residues 1–29 (MNDK…MSID), 67–88 (LKDQ…SGSY), and 116–146 (HTPK…IPYT). The span at 72-88 (EQQYNGDKNNEPKSGSY) shows a compositional bias: polar residues. The residue at position 165 (serine 165) is a Phosphoserine. Disordered stretches follow at residues 210 to 263 (TNSL…QGTN) and 284 to 338 (RSTS…PIWR). Positions 216–234 (INSAHRNTSSSSTASSIPR) are enriched in low complexity. Positions 242–254 (SIRDLHAKTKPVE) are enriched in basic and acidic residues. 2 stretches are compositionally biased toward polar residues: residues 284–297 (RSTS…GTSA) and 312–330 (SKTS…ATGT).

It belongs to the SHE1 family.

It localises to the cytoplasm. The protein localises to the cytoskeleton. The protein resides in the spindle. It is found in the bud neck. Functionally, may have a role related to the spindle integrity function of the DAM1 complex, which is essential for proper chromosome segregation. Causes growth arrest when highly overexpressed. The protein is Mitotic spindle-associated protein SHE1 (SHE1) of Saccharomyces cerevisiae (strain YJM789) (Baker's yeast).